Here is a 377-residue protein sequence, read N- to C-terminus: Chaperone protein DnaJ (377 aa).

Residues 5–70 (DYYQVLGVAK…QKRAAYDQYG (66 aa)) enclose the J domain. Residues 137–215 (GYDTQIRVPS…CHGAGKTKET (79 aa)) form a CR-type zinc finger. Residues Cys-150, Cys-153, Cys-167, Cys-170, Cys-189, Cys-192, Cys-203, and Cys-206 each contribute to the Zn(2+) site. CXXCXGXG motif repeat units lie at residues 150–157 (CEICHGSG), 167–174 (CPTCNGSG), 189–196 (CPKCHGTG), and 203–210 (CTHCHGAG).

Belongs to the DnaJ family. As to quaternary structure, homodimer. Zn(2+) is required as a cofactor.

The protein resides in the cytoplasm. In terms of biological role, participates actively in the response to hyperosmotic and heat shock by preventing the aggregation of stress-denatured proteins and by disaggregating proteins, also in an autonomous, DnaK-independent fashion. Unfolded proteins bind initially to DnaJ; upon interaction with the DnaJ-bound protein, DnaK hydrolyzes its bound ATP, resulting in the formation of a stable complex. GrpE releases ADP from DnaK; ATP binding to DnaK triggers the release of the substrate protein, thus completing the reaction cycle. Several rounds of ATP-dependent interactions between DnaJ, DnaK and GrpE are required for fully efficient folding. Also involved, together with DnaK and GrpE, in the DNA replication of plasmids through activation of initiation proteins. This chain is Chaperone protein DnaJ, found in Paraburkholderia phymatum (strain DSM 17167 / CIP 108236 / LMG 21445 / STM815) (Burkholderia phymatum).